Consider the following 638-residue polypeptide: RAF proto-oncogene serine/threonine-protein kinase (638 aa).

Serine 43 carries the post-translational modification Phosphoserine. An RBD domain is found at 56–130 (STMRVYLPNK…VGAELQVDFL (75 aa)). Residues 137 to 183 (THNFVRKTFLKLAFCDICQKFLLNAFRCQTCGYKFHEHCSTKVPTMC) form a Phorbol-ester/DAG-type zinc finger. Residues histidine 138, cysteine 151, cysteine 154, cysteine 164, cysteine 167, histidine 172, cysteine 175, and cysteine 183 each contribute to the Zn(2+) site. Residue serine 257 is modified to Phosphoserine. Threonine 266 bears the Phosphothreonine; by autocatalysis mark. The tract at residues 279-323 (LRSHSESGSPNNLSPTGWSNAKAPAPTHREKAASSTGQEKNKIRA) is disordered. Residues 284-297 (ESGSPNNLSPTGWS) show a composition bias toward polar residues. Phosphoserine is present on serine 329. The Protein kinase domain maps to 340–600 (VMLSSRIGSG…PQILSSIELL (261 aa)). Residues 346–354 (IGSGSFGTV) and lysine 366 each bind ATP. Aspartate 459 (proton acceptor) is an active-site residue. Serine 490 carries the phosphoserine modification.

Belongs to the protein kinase superfamily. TKL Ser/Thr protein kinase family. RAF subfamily. It depends on Zn(2+) as a cofactor. In terms of processing, phosphorylation at Ser-257 inactivates kinase activity. Dephosphorylation of Ser-257 by a complex containing protein phosphatase 1 relieves inactivation, leading to stimulate RAF1 activity.

The protein localises to the cytoplasm. The protein resides in the cell membrane. The enzyme catalyses L-seryl-[protein] + ATP = O-phospho-L-seryl-[protein] + ADP + H(+). It carries out the reaction L-threonyl-[protein] + ATP = O-phospho-L-threonyl-[protein] + ADP + H(+). In terms of biological role, serine/threonine-protein kinase that acts as a regulatory link between the membrane-associated Ras GTPases and the MAPK/ERK cascade, and this critical regulatory link functions as a switch determining cell fate decisions. RAF1 activation initiates a mitogen-activated protein kinase (MAPK) cascade that comprises a sequential phosphorylation of the dual-specific MAPK kinases (MAP2K1/MEK1 and MAP2K2/MEK2) and the extracellular signal-regulated kinases (MAPK3/ERK1 and MAPK1/ERK2). This chain is RAF proto-oncogene serine/threonine-protein kinase (raf1), found in Xenopus laevis (African clawed frog).